Here is a 202-residue protein sequence, read N- to C-terminus: Protein-methionine-sulfoxide reductase heme-binding subunit MsrQ (202 aa).

Transmembrane regions (helical) follow at residues 8-28 (IVWLKVLLHLAGFLPLVWLFW), 82-102 (LWCFAWATLHLTSYTLLELGI), 116-136 (PYLTLGMISWAILLALAVTST), 149-169 (LLHNFVYLVAILAPIHYLWSV), and 171-191 (IVSPQPVVYALLAAGLLTWRY).

It belongs to the MsrQ family. In terms of assembly, heterodimer of a catalytic subunit (MsrP) and a heme-binding subunit (MsrQ). Requires FMN as cofactor. Heme b is required as a cofactor.

The protein resides in the cell inner membrane. Part of the MsrPQ system that repairs oxidized periplasmic proteins containing methionine sulfoxide residues (Met-O), using respiratory chain electrons. Thus protects these proteins from oxidative-stress damage caused by reactive species of oxygen and chlorine generated by the host defense mechanisms. MsrPQ is essential for the maintenance of envelope integrity under bleach stress, rescuing a wide series of structurally unrelated periplasmic proteins from methionine oxidation. MsrQ provides electrons for reduction to the reductase catalytic subunit MsrP, using the quinone pool of the respiratory chain. In Klebsiella pneumoniae subsp. pneumoniae (strain ATCC 700721 / MGH 78578), this protein is Protein-methionine-sulfoxide reductase heme-binding subunit MsrQ.